The sequence spans 389 residues: uncharacterized protein (389 aa).

Disordered stretches follow at residues 119-156, 180-233, 294-321, and 362-389; these read SSLFDARKSSRSRGAVIKSPSTINIEKNRHSSNSGENQ, PTSK…SSMG, SIPSGRNSESARSRQTKRSPFGSVTSRT, and PEDMQEEDEKHNGSVWGSDTSLEEEIKV. The span at 137 to 155 shows a compositional bias: polar residues; sequence SPSTINIEKNRHSSNSGEN. The segment covering 190–204 has biased composition (acidic residues); that stretch reads DDGDEEDDTDDEGEA.

This is an uncharacterized protein from Caenorhabditis elegans.